The following is a 718-amino-acid chain: Sodium/myo-inositol cotransporter (718 aa).

Over 1–9 (MRAVLETAD) the chain is Extracellular. A helical transmembrane segment spans residues 10–29 (IAIVALYFILVMCIGFFAMW). The Cytoplasmic portion of the chain corresponds to 30–38 (KSNRSTVSG). Residues 39–57 (YFLAGRSMTWVAIGASLFV) form a helical membrane-spanning segment. Residues 58–86 (SNIGSEHFIGLAGSGAASGFAVGAWEFNA) lie on the Extracellular side of the membrane. The helical transmembrane segment at 87 to 110 (LLLLQLLGWVFIPIYIRSGVYTMP) threads the bilayer. Residues 111 to 123 (EYLSKRFGGHRIQ) lie on the Cytoplasmic side of the membrane. A helical membrane pass occupies residues 124-144 (VYFAALSLILYIFTKLSVDLY). The Extracellular portion of the chain corresponds to 145-157 (SGALFIQESMGWN). A helical transmembrane segment spans residues 158–183 (LYVSVILLIGMTALLTVTGGLVAVIY). Residues 184–186 (TDT) are Cytoplasmic-facing. The chain crosses the membrane as a helical span at residues 187-205 (LQALLMIVGALTLMVISMM). Residues 206–303 (EIGGFEEVKR…HAKGSTLMAG (98 aa)) lie on the Extracellular side of the membrane. Asn-232 carries an N-linked (GlcNAc...) asparagine glycan. The helical transmembrane segment at 304-324 (FLKLLPMFIIVVPGMISRILF) threads the bilayer. The Cytoplasmic segment spans residues 325 to 353 (ADDIACINPEHCMQVCGSRAGCSNIAYPR). A helical membrane pass occupies residues 354–376 (LVMKLVPVGLRGLMMAVMIAALM). The Extracellular portion of the chain corresponds to 377 to 406 (SDLDSIFNSASTIFTLDVYKLIRKSASSRE). Residues 407-430 (LMIVGRIFVAFMVVISIAWVPIIV) form a helical membrane-spanning segment. Over 431–443 (EMQGGQMYLYIQE) the chain is Cytoplasmic. The helical transmembrane segment at 444-462 (VADYLTPPVAALFLLAIFW) threads the bilayer. Residues 463–510 (KRCNEQGAFYGGMAGFILVVVRLTLAFAYRAPECDQPDNRPVFIKDIH) lie on the Extracellular side of the membrane. Residues 511-532 (YMYVATALFWITGLITVIVSLL) form a helical membrane-spanning segment. Topologically, residues 533–695 (TPPPTKEQIR…QMLEEPPQVK (163 aa)) are cytoplasmic. Phosphoserine occurs at positions 594 and 632. A helical membrane pass occupies residues 696 to 716 (VILNIGLFGVCSLGIFMFVYF). At 717–718 (SL) the chain is on the extracellular side.

The protein belongs to the sodium:solute symporter (SSF) (TC 2.A.21) family. As to quaternary structure, interacts with KCNQ2 (via the pore module). Interacts with KCNQ1; this interaction is direct. Forms coregulatory complexes with ion channels KCNQ2-KCNQ3 and KCNQ1-KCNE2.

Its subcellular location is the apical cell membrane. It localises to the basolateral cell membrane. Functionally, electrogenic Na(+)-coupled sugar symporter that actively transports myo-inositol and its stereoisomer scyllo-inositol across the plasma membrane, with a Na(+) to sugar coupling ratio of 2:1. Maintains myo-inositol concentration gradient that defines cell volume and fluid balance during osmotic stress, in particular in the fetoplacental unit and central nervous system. Forms coregulatory complexes with voltage-gated K(+) ion channels, allosterically altering ion selectivity, voltage dependence and gating kinetics of the channel. In turn, K(+) efflux through the channel forms a local electrical gradient that modulates electrogenic Na(+)-coupled myo-inositol influx through the transporter. Associates with KCNQ1-KCNE2 channel in the apical membrane of choroid plexus epithelium and regulates the myo-inositol gradient between blood and cerebrospinal fluid with an impact on neuron excitability. Associates with KCNQ2-KCNQ3 channel altering ion selectivity, increasing Na(+) and Cs(+) permeation relative to K(+) permeation. Provides myo-inositol precursor for biosynthesis of phosphoinositides such as PI(4,5)P2, thus indirectly affecting the activity of phosphoinositide-dependent ion channels and Ca(2+) signaling upon osmotic stress. This is Sodium/myo-inositol cotransporter (SLC5A3) from Bos taurus (Bovine).